Reading from the N-terminus, the 242-residue chain is NADH-quinone oxidoreductase subunit C (242 aa).

Positions 67–101 (VVNSVGLGHKEQGAKPITNRRTTSDNVGESKSIDY) are insert.

Belongs to the complex I 30 kDa subunit family. In terms of assembly, NDH-1 is composed of 14 different subunits. Subunits NuoB, C, D, E, F, and G constitute the peripheral sector of the complex.

Its subcellular location is the cell inner membrane. The catalysed reaction is a quinone + NADH + 5 H(+)(in) = a quinol + NAD(+) + 4 H(+)(out). Functionally, NDH-1 shuttles electrons from NADH, via FMN and iron-sulfur (Fe-S) centers, to quinones in the respiratory chain. The immediate electron acceptor for the enzyme in this species is believed to be ubiquinone. Couples the redox reaction to proton translocation (for every two electrons transferred, four hydrogen ions are translocated across the cytoplasmic membrane), and thus conserves the redox energy in a proton gradient. This is NADH-quinone oxidoreductase subunit C from Rickettsia conorii (strain ATCC VR-613 / Malish 7).